A 38-amino-acid polypeptide reads, in one-letter code: Photosystem II reaction center protein L (38 aa).

Residues 17–37 form a helical membrane-spanning segment; sequence SLYWGLLLIFVLAVLFSSYIF.

Belongs to the PsbL family. As to quaternary structure, PSII is composed of 1 copy each of membrane proteins PsbA, PsbB, PsbC, PsbD, PsbE, PsbF, PsbH, PsbI, PsbJ, PsbK, PsbL, PsbM, PsbT, PsbX, PsbY, PsbZ, Psb30/Ycf12, at least 3 peripheral proteins of the oxygen-evolving complex and a large number of cofactors. It forms dimeric complexes.

It is found in the plastid. Its subcellular location is the chloroplast thylakoid membrane. Its function is as follows. One of the components of the core complex of photosystem II (PSII). PSII is a light-driven water:plastoquinone oxidoreductase that uses light energy to abstract electrons from H(2)O, generating O(2) and a proton gradient subsequently used for ATP formation. It consists of a core antenna complex that captures photons, and an electron transfer chain that converts photonic excitation into a charge separation. This subunit is found at the monomer-monomer interface and is required for correct PSII assembly and/or dimerization. This is Photosystem II reaction center protein L from Ostreococcus tauri.